The primary structure comprises 272 residues: Phosphatidylglycerol--prolipoprotein diacylglyceryl transferase (272 aa).

4 helical membrane passes run 15–35 (LGPL…LVLF), 53–73 (AFAV…WHVV), 94–114 (GLGF…IAKI), and 117–137 (VPPF…LCFA). Arg138 provides a ligand contact to a 1,2-diacyl-sn-glycero-3-phospho-(1'-sn-glycerol). 3 helical membrane-spanning segments follow: residues 174-194 (FHPI…ILLV), 199-219 (VFVK…VLYG), and 237-257 (FGLD…VLIA).

This sequence belongs to the Lgt family.

It is found in the cell membrane. The enzyme catalyses L-cysteinyl-[prolipoprotein] + a 1,2-diacyl-sn-glycero-3-phospho-(1'-sn-glycerol) = an S-1,2-diacyl-sn-glyceryl-L-cysteinyl-[prolipoprotein] + sn-glycerol 1-phosphate + H(+). Its pathway is protein modification; lipoprotein biosynthesis (diacylglyceryl transfer). In terms of biological role, catalyzes the transfer of the diacylglyceryl group from phosphatidylglycerol to the sulfhydryl group of the N-terminal cysteine of a prolipoprotein, the first step in the formation of mature lipoproteins. This Tropheryma whipplei (strain TW08/27) (Whipple's bacillus) protein is Phosphatidylglycerol--prolipoprotein diacylglyceryl transferase.